Reading from the N-terminus, the 302-residue chain is Segregation and condensation protein A (302 aa).

It belongs to the ScpA family. In terms of assembly, component of a cohesin-like complex composed of ScpA, ScpB and the Smc homodimer, in which ScpA and ScpB bind to the head domain of Smc. The presence of the three proteins is required for the association of the complex with DNA.

Its subcellular location is the cytoplasm. In terms of biological role, participates in chromosomal partition during cell division. May act via the formation of a condensin-like complex containing Smc and ScpB that pull DNA away from mid-cell into both cell halves. The polypeptide is Segregation and condensation protein A (Xylella fastidiosa (strain Temecula1 / ATCC 700964)).